The primary structure comprises 652 residues: Probable export ATP-binding/permease protein PFL_2149 (652 aa).

Residues 6-244 form the ABC transporter domain; that stretch reads LHLTGISRSF…APSEPPVSVR (239 aa). An ATP-binding site is contributed by 42-49; sequence GASGSGKS. The next 5 helical transmembrane spans lie at 251-271, 277-297, 525-545, 586-606, and 615-635; these read LVASLGLFKEAFVMAWVALVS, LLTMLGIVIGITSVVSIVAIG, LALLLSLIAVISLVVGGIGVM, IGGAIGISLSFAIGYLFTLFI, and MGSIITAFACSTLIGIVFGFV.

This sequence belongs to the ABC transporter superfamily. Macrolide exporter (TC 3.A.1.122) family. Probably part of a tripartite efflux system, which is composed of an inner membrane transporter, a periplasmic membrane fusion protein, and an outer membrane component.

The protein resides in the cell inner membrane. Its function is as follows. Probably part of a tripartite efflux system. This Pseudomonas fluorescens (strain ATCC BAA-477 / NRRL B-23932 / Pf-5) protein is Probable export ATP-binding/permease protein PFL_2149.